Here is a 601-residue protein sequence, read N- to C-terminus: Probable HECT-type ubiquitin ligase-interacting protein creD (601 aa).

Disordered stretches follow at residues 374–397 (EVDP…GTLS) and 455–489 (SADY…DHDH). Residues 461–473 (PSSGSNSHSPASP) show a composition bias toward low complexity. The span at 475–489 (LSRRPSDEGYHDHDH) shows a compositional bias: basic and acidic residues.

Belongs to the arrestin family. As to quaternary structure, interacts with hulA.

In terms of biological role, component of the regulatory network controlling carbon source utilization through ubiquitination and deubiquitination involving creA, creB, creC, creD and acrB. May be involved in signaling by recognizing appropriately phosphorylated substrates via its arrestin domains and then recruit a HECT-type ubiquitin ligase such as hulA, leading to ubiquitination of the substrate, providing a link between ubiquitination and phosphorylation in protein regulation and stability. The sequence is that of Probable HECT-type ubiquitin ligase-interacting protein creD (creD) from Neosartorya fischeri (strain ATCC 1020 / DSM 3700 / CBS 544.65 / FGSC A1164 / JCM 1740 / NRRL 181 / WB 181) (Aspergillus fischerianus).